A 302-amino-acid polypeptide reads, in one-letter code: Mas-related G-protein coupled receptor member A3 (302 aa).

The Extracellular segment spans residues 1-17 (MNETIPGSIDIETLIPD). Asn2 carries N-linked (GlcNAc...) asparagine glycosylation. The chain crosses the membrane as a helical span at residues 18 to 38 (LMIIIFGLVGLTGNAIVFWLL). At 39-46 (GFRMHRTA) the chain is on the cytoplasmic side. The chain crosses the membrane as a helical span at residues 47–67 (FLVYILNLALADFLFLLCHII). The N-linked (GlcNAc...) asparagine glycan is linked to Asn68. At 68 to 81 (NSTVDLLKFTLPKG) the chain is on the extracellular side. Residues 82–102 (IFAFCFHTIKRVLYITGLSML) form a helical membrane-spanning segment. Residues 103–129 (SAISTERCLSVLCPIWYHCRRPEHTST) are Cytoplasmic-facing. The chain crosses the membrane as a helical span at residues 130–150 (VMCAVIWVLSLLICILDGYFC). The Extracellular portion of the chain corresponds to 151–167 (GYLDNHYFNYSVCQAWD). Asn159 is a glycosylation site (N-linked (GlcNAc...) asparagine). A helical transmembrane segment spans residues 168-188 (IFIGAYLMFLFVVLCLSTLAL). The Cytoplasmic segment spans residues 189–211 (LARLFCGARNMKFTRLFVTIMLT). A helical membrane pass occupies residues 212–232 (VLVFLLCGLPWGITWFLLFWI). Topologically, residues 233 to 242 (APGVFVLDYS) are extracellular. The chain crosses the membrane as a helical span at residues 243 to 263 (PLLVLTAINSCANPIIYFFVG). The Cytoplasmic portion of the chain corresponds to 264–302 (SFRQRLNKQTLKMVLQKALQDTPETPENMVEMSRNKAEP).

It belongs to the G-protein coupled receptor 1 family. Mas subfamily. In terms of tissue distribution, expressed exclusively in dorsal root ganglia and nodose ganglia. Expressed in a subset of sensory neurons that includes nociceptors. Expressed in the subclass of non-peptidergic sensory neurons that are IB4(+) and VR1(-).

Its subcellular location is the cell membrane. Functionally, orphan receptor. May be a receptor for RFamide-family neuropeptides such as NPFF and NPAF, which are analgesic in vivo. May regulate nociceptor function and/or development, including the sensation or modulation of pain. Activated by the antimalarial drug chloroquine. Mediates chloroquine-induced itch, in a histamine-independent manner. In Mus musculus (Mouse), this protein is Mas-related G-protein coupled receptor member A3 (Mrgpra3).